Reading from the N-terminus, the 475-residue chain is Ribulose bisphosphate carboxylase large chain (475 aa).

Positions M1–S2 are excised as a propeptide. P3 carries the N-acetylproline modification. Position 14 is an N6,N6,N6-trimethyllysine (K14). 2 residues coordinate substrate: N123 and T173. K175 functions as the Proton acceptor in the catalytic mechanism. Residue K177 coordinates substrate. K201, D203, and E204 together coordinate Mg(2+). An N6-carboxylysine modification is found at K201. H294 serves as the catalytic Proton acceptor. Substrate contacts are provided by R295, H327, and S379.

It belongs to the RuBisCO large chain family. Type I subfamily. In terms of assembly, heterohexadecamer of 8 large chains and 8 small chains. Mg(2+) serves as cofactor.

It is found in the plastid. It localises to the chloroplast. The catalysed reaction is 2 (2R)-3-phosphoglycerate + 2 H(+) = D-ribulose 1,5-bisphosphate + CO2 + H2O. It carries out the reaction D-ribulose 1,5-bisphosphate + O2 = 2-phosphoglycolate + (2R)-3-phosphoglycerate + 2 H(+). Functionally, ruBisCO catalyzes two reactions: the carboxylation of D-ribulose 1,5-bisphosphate, the primary event in carbon dioxide fixation, as well as the oxidative fragmentation of the pentose substrate in the photorespiration process. Both reactions occur simultaneously and in competition at the same active site. This Nymphaea alba (White water-lily) protein is Ribulose bisphosphate carboxylase large chain.